A 409-amino-acid chain; its full sequence is Shaggy-related protein kinase gamma (409 aa).

Ala-2 carries the post-translational modification N-acetylalanine. The region spanning 73 to 357 (YMAERVVGHG…ALDSLVHPFF (285 aa)) is the Protein kinase domain. ATP-binding positions include 79-87 (VGHGSFGVV) and Lys-102. Asp-198 (proton acceptor) is an active-site residue. Tyr-233 carries the post-translational modification Phosphotyrosine.

The protein belongs to the protein kinase superfamily. CMGC Ser/Thr protein kinase family. GSK-3 subfamily. Binds to KIB1. Component of a complex made of POLAR, BASL, ASK7/BIN2 and ASK3/SK12. Binds to POLAR and BASL. Autophosphorylated mainly on threonine and serine residues. In terms of tissue distribution, roots, shoots and leaves.

Its subcellular location is the cytoplasm. The protein resides in the cell cortex. The catalysed reaction is L-seryl-[protein] + ATP = O-phospho-L-seryl-[protein] + ADP + H(+). The enzyme catalyses L-threonyl-[protein] + ATP = O-phospho-L-threonyl-[protein] + ADP + H(+). Functionally, may mediate extracellular signals to regulate transcription in differentiating cells. Probably involved first at the cortical polarity site, to restrict MAPK signaling and promote asymmetric cell division (ACD), and second in the nucleus of stomatal lineage ground cells (SLGCs) or meristemoids, to limit cell division and to promote differentiation into pavement or stomatal guard cells, respectively. Phosphorylate YDA and SPCH in vitro. This Arabidopsis thaliana (Mouse-ear cress) protein is Shaggy-related protein kinase gamma.